The following is a 117-amino-acid chain: Large ribosomal subunit protein bL20c (117 aa).

It belongs to the bacterial ribosomal protein bL20 family.

Its subcellular location is the plastid. It is found in the chloroplast. Functionally, binds directly to 23S ribosomal RNA and is necessary for the in vitro assembly process of the 50S ribosomal subunit. It is not involved in the protein synthesizing functions of that subunit. This is Large ribosomal subunit protein bL20c from Nasturtium officinale (Watercress).